Consider the following 239-residue polypeptide: Large ribosomal subunit protein bL25 (239 aa).

The segment at 217-239 (IKAEAHAAEGTQAEGSTEEGQQQ) is disordered. The segment covering 229-239 (AEGSTEEGQQQ) has biased composition (polar residues).

The protein belongs to the bacterial ribosomal protein bL25 family. CTC subfamily. As to quaternary structure, part of the 50S ribosomal subunit; part of the 5S rRNA/L5/L18/L25 subcomplex. Contacts the 5S rRNA. Binds to the 5S rRNA independently of L5 and L18.

Its function is as follows. This is one of the proteins that binds to the 5S RNA in the ribosome where it forms part of the central protuberance. The sequence is that of Large ribosomal subunit protein bL25 from Deinococcus deserti (strain DSM 17065 / CIP 109153 / LMG 22923 / VCD115).